The chain runs to 437 residues: 3-ketoacyl-CoA thiolase (437 aa).

Residue Cys99 is the Acyl-thioester intermediate of the active site. Residues His392 and Cys422 each act as proton acceptor in the active site.

This sequence belongs to the thiolase-like superfamily. Thiolase family. As to quaternary structure, heterotetramer of two alpha chains (FadJ) and two beta chains (FadI).

It localises to the cytoplasm. It carries out the reaction an acyl-CoA + acetyl-CoA = a 3-oxoacyl-CoA + CoA. The protein operates within lipid metabolism; fatty acid beta-oxidation. Catalyzes the final step of fatty acid oxidation in which acetyl-CoA is released and the CoA ester of a fatty acid two carbons shorter is formed. This chain is 3-ketoacyl-CoA thiolase, found in Pectobacterium atrosepticum (strain SCRI 1043 / ATCC BAA-672) (Erwinia carotovora subsp. atroseptica).